Consider the following 496-residue polypeptide: Probable cytosol aminopeptidase (496 aa).

Residues Lys258 and Asp263 each contribute to the Mn(2+) site. The active site involves Lys270. Mn(2+) is bound by residues Asp281, Asp340, and Glu342. Arg344 is a catalytic residue.

Belongs to the peptidase M17 family. It depends on Mn(2+) as a cofactor.

The protein resides in the cytoplasm. The catalysed reaction is Release of an N-terminal amino acid, Xaa-|-Yaa-, in which Xaa is preferably Leu, but may be other amino acids including Pro although not Arg or Lys, and Yaa may be Pro. Amino acid amides and methyl esters are also readily hydrolyzed, but rates on arylamides are exceedingly low.. It carries out the reaction Release of an N-terminal amino acid, preferentially leucine, but not glutamic or aspartic acids.. Its function is as follows. Presumably involved in the processing and regular turnover of intracellular proteins. Catalyzes the removal of unsubstituted N-terminal amino acids from various peptides. The sequence is that of Probable cytosol aminopeptidase from Helicobacter pylori (strain G27).